The chain runs to 326 residues: Bifunctional pinoresinol-lariciresinol reductase (326 aa).

NADP(+) contacts are provided by residues Gly-25 to Gly-31, Arg-50, and Lys-59. Catalysis depends on Lys-153, which acts as the Proton acceptor. Arg-157 serves as a coordination point for NADP(+). His-285 is a binding site for substrate.

This sequence belongs to the NmrA-type oxidoreductase family. Isoflavone reductase subfamily. In terms of assembly, dimer.

The enzyme catalyses (+)-lariciresinol + NADP(+) = (+)-pinoresinol + NADPH + H(+). The catalysed reaction is (-)-secoisolariciresinol + NADP(+) = (+)-lariciresinol + NADPH + H(+). Functionally, reductase involved in lignan biosynthesis. Catalyzes the enantioselective conversion of (+)-pinoresinol into (+)-lariciresinol and of (+)-lariciresinol into (-)-secoisolariciresinol. Abstracts the 4R-hydride from the NADPH cofactor during catalysis. The polypeptide is Bifunctional pinoresinol-lariciresinol reductase (PLR1) (Linum album (Flax)).